The sequence spans 395 residues: Phosphopentomutase (395 aa).

Residues D13, D288, H293, D329, H330, and H341 each contribute to the Mn(2+) site.

It belongs to the phosphopentomutase family. It depends on Mn(2+) as a cofactor.

The protein localises to the cytoplasm. The catalysed reaction is 2-deoxy-alpha-D-ribose 1-phosphate = 2-deoxy-D-ribose 5-phosphate. It carries out the reaction alpha-D-ribose 1-phosphate = D-ribose 5-phosphate. The protein operates within carbohydrate degradation; 2-deoxy-D-ribose 1-phosphate degradation; D-glyceraldehyde 3-phosphate and acetaldehyde from 2-deoxy-alpha-D-ribose 1-phosphate: step 1/2. In terms of biological role, isomerase that catalyzes the conversion of deoxy-ribose 1-phosphate (dRib-1-P) and ribose 1-phosphate (Rib-1-P) to deoxy-ribose 5-phosphate (dRib-5-P) and ribose 5-phosphate (Rib-5-P), respectively. This chain is Phosphopentomutase, found in Agathobacter rectalis (strain ATCC 33656 / DSM 3377 / JCM 17463 / KCTC 5835 / VPI 0990) (Eubacterium rectale).